A 152-amino-acid polypeptide reads, in one-letter code: Large-conductance mechanosensitive channel (152 aa).

A run of 3 helical transmembrane segments spans residues 14-34 (VVDM…VKSL), 39-59 (LMPG…FLVI), and 85-105 (GLFI…FLVI).

It belongs to the MscL family. In terms of assembly, homopentamer.

It is found in the cell inner membrane. In terms of biological role, channel that opens in response to stretch forces in the membrane lipid bilayer. May participate in the regulation of osmotic pressure changes within the cell. This chain is Large-conductance mechanosensitive channel, found in Syntrophus aciditrophicus (strain SB).